A 194-amino-acid chain; its full sequence is Ribonuclease HII (194 aa).

Residues 3-193 (ILTAGVDEAG…VRNLLAQQTL (191 aa)) enclose the RNase H type-2 domain. Positions 9, 10, and 101 each coordinate a divalent metal cation.

The protein belongs to the RNase HII family. It depends on Mn(2+) as a cofactor. Mg(2+) serves as cofactor.

Its subcellular location is the cytoplasm. The catalysed reaction is Endonucleolytic cleavage to 5'-phosphomonoester.. Functionally, endonuclease that specifically degrades the RNA of RNA-DNA hybrids. The sequence is that of Ribonuclease HII from Neisseria meningitidis serogroup C (strain 053442).